The following is a 350-amino-acid chain: Probable poly-beta-1,6-N-acetyl-D-glucosamine export protein (350 aa).

A run of 10 helical transmembrane segments spans residues 8–28, 40–60, 83–103, 119–139, 146–166, 182–202, 216–236, 254–274, 276–296, and 308–328; these read LVYL…LTQI, LVLQ…FIIL, YILI…SLLT, QWYG…YIIF, FNSK…LYYF, LSEN…AYMG, LVIM…LANG, IMFI…FNTI, MISA…DSLF, and VFLA…GMIL.

The protein belongs to the acyltransferase 3 family.

The protein resides in the cell membrane. Functionally, presumably involved in the export of the biofilm adhesin polysaccharide poly-beta-1,6-N-acetyl-D-glucosamine (PNAG, also referred to as PIA) across the cell membrane. The protein is Probable poly-beta-1,6-N-acetyl-D-glucosamine export protein (icaC) of Staphylococcus aureus (strain NCTC 8325 / PS 47).